The sequence spans 395 residues: Mannan polymerase complexes subunit MNN9 (395 aa).

The Cytoplasmic segment spans residues 2–17 (SLSLVSYRLRKNPWVN). The chain crosses the membrane as a helical; Signal-anchor for type II membrane protein span at residues 18-33 (IFLPVLAIFLIYIIFF). Residues 34–395 (QRDQSLLGLN…LVYHIEEENH (362 aa)) lie on the Lumenal side of the membrane.

This sequence belongs to the ANP1/MMN9/VAN1 family. In terms of assembly, the M-Pol I complex contains MNN9 and VAN1. The M-Pol II complex is composed of ANP1, MNN9, MNN10, MNN11 and HOC1.

Its subcellular location is the endoplasmic reticulum membrane. The protein localises to the golgi apparatus membrane. It participates in protein modification; protein glycosylation. Functionally, the M-Pol I and M-Pol II complexes possess alpha-1,6-mannosyltransferase activity and are probably involved in the elongation of the mannan backbone of N-linked glycans on cell wall and periplasmic proteins. May also provide alpha-1,2-mannosyltransferase activity to the M-Pol I complex. The chain is Mannan polymerase complexes subunit MNN9 (MNN9) from Saccharomyces cerevisiae (strain ATCC 204508 / S288c) (Baker's yeast).